Consider the following 153-residue polypeptide: Catabolic 3-dehydroquinase (153 aa).

The active-site Proton acceptor is Tyr24. Residues Asn75, His81, and Asp88 each coordinate substrate. His101 functions as the Proton donor in the catalytic mechanism. Residues 102–103 (VS) and Arg112 contribute to the substrate site.

Belongs to the type-II 3-dehydroquinase family. As to quaternary structure, homododecamer. Adopts a ring-like structure, composed of an arrangement of two hexameric rings stacked on top of one another.

It catalyses the reaction 3-dehydroquinate = 3-dehydroshikimate + H2O. It functions in the pathway aromatic compound metabolism; 3,4-dihydroxybenzoate biosynthesis; 3,4-dihydroxybenzoate from 3-dehydroquinate: step 1/2. Its function is as follows. Is involved in the catabolism of quinate. Allows the utilization of quinate as carbon source via the beta-ketoadipate pathway. This Aspergillus oryzae (strain ATCC 42149 / RIB 40) (Yellow koji mold) protein is Catabolic 3-dehydroquinase.